The primary structure comprises 158 residues: NAD(P)H-quinone oxidoreductase subunit J, chloroplastic (158 aa).

The protein belongs to the complex I 30 kDa subunit family. NDH is composed of at least 16 different subunits, 5 of which are encoded in the nucleus.

The protein localises to the plastid. It localises to the chloroplast thylakoid membrane. The enzyme catalyses a plastoquinone + NADH + (n+1) H(+)(in) = a plastoquinol + NAD(+) + n H(+)(out). The catalysed reaction is a plastoquinone + NADPH + (n+1) H(+)(in) = a plastoquinol + NADP(+) + n H(+)(out). Its function is as follows. NDH shuttles electrons from NAD(P)H:plastoquinone, via FMN and iron-sulfur (Fe-S) centers, to quinones in the photosynthetic chain and possibly in a chloroplast respiratory chain. The immediate electron acceptor for the enzyme in this species is believed to be plastoquinone. Couples the redox reaction to proton translocation, and thus conserves the redox energy in a proton gradient. This chain is NAD(P)H-quinone oxidoreductase subunit J, chloroplastic, found in Nymphaea alba (White water-lily).